The chain runs to 224 residues: RNA-binding protein 24-B (224 aa).

Residues 11–88 (TKIFVGGLPY…RKANVNLAYL (78 aa)) enclose the RRM domain.

It is found in the nucleus. The protein resides in the cytoplasm. In terms of biological role, multifunctional RNA-binding protein involved in the regulation of pre-mRNA splicing, mRNA stability and mRNA translation important for cell fate decision and differentiation. Plays a major role in pre-mRNA alternative splicing regulation. Mediates preferentially muscle-specific exon inclusion in numerous mRNAs important for striated cardiac and skeletal muscle cell differentiation. Binds to intronic splicing enhancer (ISE) composed of stretches of GU-rich motifs localized in flanking intron of exon that will be included by alternative splicing. Involved in embryonic stem cell (ESC) transition to cardiac cell differentiation by promoting pre-mRNA alternative splicing events of several pluripotency and/or differentiation genes. Plays a role in the regulation of mRNA stability and mRNA translation to which it is bound. Involved in myogenic differentiation by regulating myog levels. Binds to a huge amount of mRNAs. Required for embryonic heart development, sarcomer and M-band formation in striated muscles. In Xenopus laevis (African clawed frog), this protein is RNA-binding protein 24-B (rbm24-b).